The following is a 110-amino-acid chain: UPF0122 protein SE_0911 (110 aa).

It belongs to the UPF0122 family.

Functionally, might take part in the signal recognition particle (SRP) pathway. This is inferred from the conservation of its genetic proximity to ftsY/ffh. May be a regulatory protein. In Staphylococcus epidermidis (strain ATCC 12228 / FDA PCI 1200), this protein is UPF0122 protein SE_0911.